The chain runs to 398 residues: Exodeoxyribonuclease 7 large subunit (398 aa).

It belongs to the XseA family. Heterooligomer composed of large and small subunits.

The protein resides in the cytoplasm. The enzyme catalyses Exonucleolytic cleavage in either 5'- to 3'- or 3'- to 5'-direction to yield nucleoside 5'-phosphates.. Its function is as follows. Bidirectionally degrades single-stranded DNA into large acid-insoluble oligonucleotides, which are then degraded further into small acid-soluble oligonucleotides. This Chlorobaculum tepidum (strain ATCC 49652 / DSM 12025 / NBRC 103806 / TLS) (Chlorobium tepidum) protein is Exodeoxyribonuclease 7 large subunit.